Here is a 478-residue protein sequence, read N- to C-terminus: Geranial dehydrogenase (478 aa).

An NAD(+)-binding site is contributed by 230–235 (GSTSAG). The active-site Proton acceptor is the glutamate 252. Cysteine 286 acts as the Nucleophile in catalysis.

Belongs to the aldehyde dehydrogenase family.

It carries out the reaction (2E)-geranial + NAD(+) + H2O = geranate + NADH + 2 H(+). The enzyme catalyses perillyl aldehyde + NAD(+) + H2O = perillate + NADH + 2 H(+). It participates in terpene metabolism; monoterpene degradation. Its function is as follows. Involved in the degradation of the monoterpenes beta-myrcene and limonene. During anaerobic degradation of beta-myrcene, catalyzes the NAD(+)-dependent oxidation of geranial to geranic acid. Seems to be specific for the trans-isomer geranial, since it does not act on the cis-isomer neral. During degradation of limonene, catalyzes the NAD(+)-dependent conversion of perillyl aldehyde to perrilic acid. This chain is Geranial dehydrogenase, found in Castellaniella defragrans (strain DSM 12143 / CCUG 39792 / 65Phen) (Alcaligenes defragrans).